A 456-amino-acid polypeptide reads, in one-letter code: Protein translocase subunit SecY (456 aa).

At Met1–Pro21 the chain is on the cytoplasmic side. The helical transmembrane segment at Gly22 to Pro48 threads the bilayer. The Extracellular portion of the chain corresponds to Leu49–Gln59. The helical intramembrane region spans Phe60–Leu67. A discontinuously helical membrane pass occupies residues Phe60–Ile88. An intramembrane segment occupies Ala68–Ile79. Residues Gly80–Ile88 constitute an intramembrane region (helical). The Cytoplasmic segment spans residues Leu89–Ala109. Residues Phe110–Gly134 form a helical membrane-spanning segment. Over Ser135–Pro141 the chain is Extracellular. A helical membrane pass occupies residues Gln142–Ser166. The Cytoplasmic portion of the chain corresponds to Lys167 to Ser172. A helical membrane pass occupies residues Gly173–Phe191. Topologically, residues Asn192 to Tyr224 are extracellular. The chain crosses the membrane as a helical span at residues Tyr225–Arg246. Residues Val247 to Ser275 are Cytoplasmic-facing. Residues Asn276–Gln297 form a helical membrane-spanning segment. The Extracellular segment spans residues Lys298–Phe334. Residues Arg335 to Trp354 form a helical membrane-spanning segment. Residues Val355–Ile397 lie on the Cytoplasmic side of the membrane. A helical transmembrane segment spans residues Thr398–Gly416. Topologically, residues Ser417–Gly419 are extracellular. A helical transmembrane segment spans residues Gly420–Leu434. Residues Tyr435 to Asp456 are Cytoplasmic-facing.

Belongs to the SecY/SEC61-alpha family. Component of the Sec protein translocase complex. Heterotrimer consisting of alpha (SecY), beta (SecG) and gamma (SecE) subunits. The heterotrimers can form oligomers, although 1 heterotrimer is thought to be able to translocate proteins. Interacts with the ribosome. May interact with SecDF, and other proteins may be involved.

It localises to the cell membrane. Its function is as follows. The central subunit of the protein translocation channel SecYEG. Consists of two halves formed by TMs 1-5 and 6-10. These two domains form a lateral gate at the front which open onto the bilayer between TMs 2 and 7, and are clamped together by SecE at the back. The channel is closed by both a pore ring composed of hydrophobic SecY resides and a short helix (helix 2A) on the extracellular side of the membrane which forms a plug. The plug probably moves laterally to allow the channel to open. The ring and the pore may move independently. The protein is Protein translocase subunit SecY of Methanothermobacter thermautotrophicus (strain ATCC 29096 / DSM 1053 / JCM 10044 / NBRC 100330 / Delta H) (Methanobacterium thermoautotrophicum).